A 439-amino-acid chain; its full sequence is Argininosuccinate lyase (439 aa).

It belongs to the lyase 1 family. Argininosuccinate lyase subfamily.

The protein localises to the cytoplasm. It catalyses the reaction 2-(N(omega)-L-arginino)succinate = fumarate + L-arginine. The protein operates within amino-acid biosynthesis; L-arginine biosynthesis; L-arginine from L-ornithine and carbamoyl phosphate: step 3/3. This Caldanaerobacter subterraneus subsp. tengcongensis (strain DSM 15242 / JCM 11007 / NBRC 100824 / MB4) (Thermoanaerobacter tengcongensis) protein is Argininosuccinate lyase.